Reading from the N-terminus, the 1121-residue chain is Transcription factor CSR2 (1121 aa).

Residues serine 23, serine 46, and serine 127 each carry the phosphoserine modification. Disordered regions lie at residues 273-342, 513-532, 579-600, and 837-860; these read PLHT…RSLP, HTQLVASRPRSSSISSPQKL, LKRNNSNGRSDNNGASSSGLAM, and IPQDKNHNEVNDTNGNSNTSLQTS. The span at 276 to 310 shows a compositional bias: polar residues; that stretch reads TQRTSPSNTARTGNAMDTSNSDRASPASNNNTTDA. 3 stretches are compositionally biased toward low complexity: residues 318-329, 519-529, and 582-597; these read NNNPMNNNNSPA, SRPRSSSISSP, and NNSNGRSDNNGASSSG. Phosphoserine is present on serine 327. A compositionally biased stretch (basic and acidic residues) spans 837–846; the sequence is IPQDKNHNEV. Lysine 841 participates in a covalent cross-link: Glycyl lysine isopeptide (Lys-Gly) (interchain with G-Cter in ubiquitin). The span at 847–860 shows a compositional bias: polar residues; it reads NDTNGNSNTSLQTS. Serine 987 is subject to Phosphoserine. A compositionally biased stretch (polar residues) spans 999-1009; the sequence is KTTAVSDSSNG. Disordered stretches follow at residues 999–1022 and 1075–1121; these read KTTAVSDSSNGAPIRDQQEQQARP and TPRY…EISS. The segment covering 1084 to 1093 has biased composition (low complexity); it reads TNTDYNYNDN.

Belongs to the CSR2 family. Post-translationally, phosphorylated by CDC28.

Its subcellular location is the cytoplasm. It is found in the nucleus. In terms of biological role, transcription factor involved in the regulation of fermentation and aerobic oxidation. Acts as a repressor of CYC1, which is involved in electron flow through the mitochondria under aerobic condition. Required for pseudohyphal formation upon nitrogen starvation. May be involved in viability at stationary phase and aging. The polypeptide is Transcription factor CSR2 (CSR2) (Saccharomyces cerevisiae (strain ATCC 204508 / S288c) (Baker's yeast)).